We begin with the raw amino-acid sequence, 466 residues long: Ribulose bisphosphate carboxylase large chain (466 aa).

K5 is subject to N6,N6,N6-trimethyllysine. N114 and T164 together coordinate substrate. K166 serves as the catalytic Proton acceptor. K168 contributes to the substrate binding site. Mg(2+) is bound by residues K192, D194, and E195. Residue K192 is modified to N6-carboxylysine. H285 functions as the Proton acceptor in the catalytic mechanism. 3 residues coordinate substrate: R286, H318, and S370.

The protein belongs to the RuBisCO large chain family. Type I subfamily. As to quaternary structure, heterohexadecamer of 8 large chains and 8 small chains; disulfide-linked. The disulfide link is formed within the large subunit homodimers. Mg(2+) serves as cofactor. Post-translationally, the disulfide bond which can form in the large chain dimeric partners within the hexadecamer appears to be associated with oxidative stress and protein turnover.

It is found in the plastid. Its subcellular location is the chloroplast. The enzyme catalyses 2 (2R)-3-phosphoglycerate + 2 H(+) = D-ribulose 1,5-bisphosphate + CO2 + H2O. It carries out the reaction D-ribulose 1,5-bisphosphate + O2 = 2-phosphoglycolate + (2R)-3-phosphoglycerate + 2 H(+). Its function is as follows. RuBisCO catalyzes two reactions: the carboxylation of D-ribulose 1,5-bisphosphate, the primary event in carbon dioxide fixation, as well as the oxidative fragmentation of the pentose substrate in the photorespiration process. Both reactions occur simultaneously and in competition at the same active site. This chain is Ribulose bisphosphate carboxylase large chain, found in Gonopterodendron arboreum (Maracaibo lignum-vitae).